Here is a 94-residue protein sequence, read N- to C-terminus: UPF0768 protein YBL029C-A (94 aa).

This sequence belongs to the UPF0768 family.

It is found in the cell membrane. This chain is UPF0768 protein YBL029C-A, found in Saccharomyces cerevisiae (strain ATCC 204508 / S288c) (Baker's yeast).